The chain runs to 157 residues: Regulatory protein RecX (157 aa).

This sequence belongs to the RecX family.

It is found in the cytoplasm. Its function is as follows. Modulates RecA activity. This is Regulatory protein RecX from Leptothrix cholodnii (strain ATCC 51168 / LMG 8142 / SP-6) (Leptothrix discophora (strain SP-6)).